Consider the following 134-residue polypeptide: uncharacterized protein (134 aa).

This is an uncharacterized protein from Synechococcus elongatus (strain ATCC 33912 / PCC 7942 / FACHB-805) (Anacystis nidulans R2).